Here is a 653-residue protein sequence, read N- to C-terminus: Intermembrane lipid transfer protein vps13l (653 aa).

The segment at 5–49 adopts a B box-type zinc-finger fold; it reads ISELKCQQHDKLVTIYCCACDAYFCKKCDKEKHSQDDNQEDSLHI. Residues C10, H13, C32, and H37 each coordinate Zn(2+). Disordered stretches follow at residues 159–232, 248–420, and 627–653; these read NLID…NRKK, HILN…EDDS, and EKSN…PNEN. Residues 195-213 show a composition bias toward low complexity; sequence SPSPSRSSESNSTTNNNNN. Over residues 266 to 277 the composition is skewed to acidic residues; the sequence is DYDDDDDNDDDN. Over residues 278–293 the composition is skewed to low complexity; that stretch reads NNNNNNNNNNNNNNNN. The segment covering 314–330 has biased composition (basic and acidic residues); sequence ETEKEIENVENKIDNKP. The span at 366-381 shows a compositional bias: acidic residues; the sequence is IFEEEEEEEEDEDEVG.

Belongs to the VPS13 family.

The protein resides in the membrane. Mediates the transfer of lipids between membranes at organelle contact sites. This chain is Intermembrane lipid transfer protein vps13l (vps13l), found in Dictyostelium discoideum (Social amoeba).